Here is a 289-residue protein sequence, read N- to C-terminus: Phosphate import ATP-binding protein PstB 2 (289 aa).

The ABC transporter domain occupies 37–276 (LHAKVEAFYY…HTPVIFQNPT (240 aa)). 69-76 (GPSGCGKS) lines the ATP pocket.

It belongs to the ABC transporter superfamily. Phosphate importer (TC 3.A.1.7) family. In terms of assembly, the complex is composed of two ATP-binding proteins (PstB), two transmembrane proteins (PstC and PstA) and a solute-binding protein (PstS).

It localises to the cell inner membrane. It carries out the reaction phosphate(out) + ATP + H2O = ADP + 2 phosphate(in) + H(+). Functionally, part of the ABC transporter complex PstSACB involved in phosphate import. Responsible for energy coupling to the transport system. This Trichormus variabilis (strain ATCC 29413 / PCC 7937) (Anabaena variabilis) protein is Phosphate import ATP-binding protein PstB 2.